The following is a 928-amino-acid chain: MYCBP-associated protein (928 aa).

2 disordered regions span residues Met-1–Asn-38 and Glu-164–Leu-183. The segment covering Glu-164–Pro-177 has biased composition (basic and acidic residues). Ser-557 carries the post-translational modification Phosphoserine. Phosphothreonine is present on Thr-558. A Phosphoserine modification is found at Ser-564. Residues Ile-786–Asp-881 are disordered. The span at Leu-806 to Ser-865 shows a compositional bias: basic and acidic residues.

In terms of assembly, interacts with MYCBP. As to expression, expressed in brain, retina, testis, heart and lung. Not detected in liver, kidney or intestine. In brain, highly abundant in CNS neurons of the hippocampus and cerebellum. Strongly expressed in cochlea and vestibular sensory epithelia. In both the organ of Corti and the vestibular organ, expression is restricted to hair cells.

Its subcellular location is the cytoplasm. The protein resides in the membrane. May play a role in spermatogenesis. May be involved in synaptic processes. This Rattus norvegicus (Rat) protein is MYCBP-associated protein.